The primary structure comprises 248 residues: Peptidyl-tRNA hydrolase (248 aa).

Tyr-14 provides a ligand contact to tRNA. His-19 (proton acceptor) is an active-site residue. Residues Phe-64, Asn-66, and Asn-112 each coordinate tRNA. A disordered region spans residues 190 to 248; sequence PRSSTGEASKGRKKAQKSEPGVAKTPAKAATPEAPAAGDIPAAPEDSRSPMQKLLDKFK. Positions 212 to 226 are enriched in low complexity; sequence AKTPAKAATPEAPAA.

This sequence belongs to the PTH family. Monomer.

It is found in the cytoplasm. It carries out the reaction an N-acyl-L-alpha-aminoacyl-tRNA + H2O = an N-acyl-L-amino acid + a tRNA + H(+). Functionally, hydrolyzes ribosome-free peptidyl-tRNAs (with 1 or more amino acids incorporated), which drop off the ribosome during protein synthesis, or as a result of ribosome stalling. Catalyzes the release of premature peptidyl moieties from peptidyl-tRNA molecules trapped in stalled 50S ribosomal subunits, and thus maintains levels of free tRNAs and 50S ribosomes. The polypeptide is Peptidyl-tRNA hydrolase (Ruegeria sp. (strain TM1040) (Silicibacter sp.)).